A 222-amino-acid chain; its full sequence is Histidinol-phosphatase (222 aa).

D8 serves as the catalytic Nucleophile. Residues D8, D10, and D184 each contribute to the Mg(2+) site. D10 (proton donor) is an active-site residue.

This sequence belongs to the HAD-like hydrolase superfamily. SerB family. Mg(2+) serves as cofactor.

The enzyme catalyses L-histidinol phosphate + H2O = L-histidinol + phosphate. The protein operates within amino-acid biosynthesis; L-histidine biosynthesis; L-histidine from 5-phospho-alpha-D-ribose 1-diphosphate: step 8/9. Catalyzes the dephosphorylation of histidinol-phosphate to histidinol, the direct precursor of histidine. In Neisseria meningitidis serogroup C (strain 8013), this protein is Histidinol-phosphatase.